We begin with the raw amino-acid sequence, 130 residues long: Small ribosomal subunit protein uS8 (130 aa).

This sequence belongs to the universal ribosomal protein uS8 family. As to quaternary structure, part of the 30S ribosomal subunit.

Functionally, one of the primary rRNA binding proteins, it binds directly to 16S rRNA central domain where it helps coordinate assembly of the platform of the 30S subunit. In Methanococcus maripaludis (strain C7 / ATCC BAA-1331), this protein is Small ribosomal subunit protein uS8.